The following is a 27-amino-acid chain: Protamine-B (27 aa).

Residues 1–27 form a disordered region; it reads ARRRRRSSRPQRRRRRRRHGRRRRGRR.

Testis.

The protein localises to the nucleus. It is found in the chromosome. Functionally, protamines substitute for histones in the chromatin of sperm during the haploid phase of spermatogenesis. They compact sperm DNA into a highly condensed, stable and inactive complex. The chain is Protamine-B from Acipenser stellatus (Sevruga).